Consider the following 142-residue polypeptide: Large ribosomal subunit protein uL11 (142 aa).

Belongs to the universal ribosomal protein uL11 family. Part of the ribosomal stalk of the 50S ribosomal subunit. Interacts with L10 and the large rRNA to form the base of the stalk. L10 forms an elongated spine to which L12 dimers bind in a sequential fashion forming a multimeric L10(L12)X complex. One or more lysine residues are methylated.

Its function is as follows. Forms part of the ribosomal stalk which helps the ribosome interact with GTP-bound translation factors. The chain is Large ribosomal subunit protein uL11 from Afipia carboxidovorans (strain ATCC 49405 / DSM 1227 / KCTC 32145 / OM5) (Oligotropha carboxidovorans).